We begin with the raw amino-acid sequence, 93 residues long: U12-lycotoxin-Ls1d (93 aa).

An N-terminal signal peptide occupies residues Met1 to Ser18. Residues Glu19–Arg38 constitute a propeptide that is removed on maturation.

It belongs to the neurotoxin 31 family. Post-translationally, contains 5 disulfide bonds. Expressed by the venom gland.

The protein resides in the secreted. This is U12-lycotoxin-Ls1d from Lycosa singoriensis (Wolf spider).